The sequence spans 1039 residues: Protein male-specific lethal-1 (1039 aa).

Over residues 1-13 (MDKRFKWPPKKRA) the composition is skewed to basic residues. Disordered regions lie at residues 1 to 44 (MDKR…HLHQ) and 171 to 199 (RRKN…QKLI). Ser-18 carries the post-translational modification Phosphoserine. Residue Ser-238 is modified to Phosphoserine. Disordered regions lie at residues 244–266 (HAGA…GEFN), 358–454 (GQSV…GNQN), 485–691 (KKDK…EIDV), and 729–799 (IYPP…SSTT). A compositionally biased stretch (basic and acidic residues) spans 255–266 (KRSESKGRGEFN). Residues 368–392 (EEDDDEDDEDDENSDKDDDSEEDDY) are compositionally biased toward acidic residues. Basic and acidic residues predominate over residues 397–407 (SDADVNARTEE). Residues 431 to 445 (AHSTPNHQQKSSTQA) show a composition bias toward polar residues. Ser-433 is modified (phosphoserine). The residue at position 434 (Thr-434) is a Phosphothreonine. 2 positions are modified to phosphoserine: Ser-492 and Ser-496. Basic and acidic residues-rich tracts occupy residues 504–515 (PHQEDAIVDHNA) and 523–570 (PKPD…DAPK). 2 stretches are compositionally biased toward polar residues: residues 581–592 (TKTSSRESTLPK) and 609–625 (NHQS…TQRL). A Phosphoserine modification is found at Ser-585. Thr-659 is modified (phosphothreonine). 2 positions are modified to phosphoserine: Ser-682 and Ser-684. Thr-747 bears the Phosphothreonine mark. Position 749 is a phosphoserine (Ser-749). A phosphothreonine mark is found at Thr-750, Thr-751, and Thr-753. The segment covering 759–768 (QHAVTSSMDQ) has biased composition (polar residues). Phosphoserine is present on residues Ser-764 and Ser-765. Position 788 is a phosphothreonine (Thr-788). Ser-810 is modified (phosphoserine). A phosphothreonine mark is found at Thr-813 and Thr-832. Positions 865–983 (SLEIPKWRDV…EARDDFGVPW (119 aa)) constitute a PEHE domain. Ser-879 and Ser-889 each carry phosphoserine. The interval 886–904 (ELLSDATFERRHQKYVKDE) is interaction with mof HAT domain. The interval 1011-1039 (IPTTAAEARHQENHSSYVFPKRRKRQKNR) is disordered. Phosphothreonine is present on Thr-1014. Ser-1025 carries the post-translational modification Phosphoserine. Over residues 1030–1039 (PKRRKRQKNR) the composition is skewed to basic residues. A Nuclear localization signal motif is present at residues 1032–1037 (RRKRQK).

Belongs to the msl-1 family. As to quaternary structure, component of the male-specific lethal (MSL) histone acetyltransferase complex, composed of mof, mle, msl-1, msl-2 and msl-3 proteins, as well as roX1 and roX2 non-coding RNAs. Interacts (via PEHE domain) with mof (via HAT domain) and msl-3 (via MRG domain); both interactions are direct. Interacts with tamo via the nuclear localization signal. Component of a maternal MSL subcomplex composed of mof, msl-1 and msl-3. Post-translationally, phosphorylation at Ser-18, Thr743, Thr-747 and Thr-751 is required to promote phosphorylation of 'Ser-5' of the C-terminal heptapeptide repeat domain (CTD) of the largest RNA polymerase II subunit Polr2A. Phosphorylated by Cdk7 in vitro. In contrast, phosphorylation at Ser-18, Thr743, Thr-747 and Thr-751 does not affect its role in dosage compensation in males. In terms of processing, ubiquitinated by msl-2.

It localises to the nucleus. It is found in the chromosome. Functionally, component of the male-specific lethal (MSL) histone acetyltransferase complex, a multiprotein complex essential for elevating transcription of the single X chromosome in the male (X chromosome dosage compensation). The MSL complex specifically associates with the single X chromosome in males and mediates formation of H4K16ac, promoting a two-fold activation of X chromosome. In complex with msl-2, promotes ubiquitination of histone H2B. In addition to its role in dosage compensation in males, regulates the activity of gene promoters: acts together with Cdk7 to promote phosphorylation of 'Ser-5' of the C-terminal heptapeptide repeat domain (CTD) of the largest RNA polymerase II subunit Polr2A. In Drosophila melanogaster (Fruit fly), this protein is Protein male-specific lethal-1.